A 354-amino-acid chain; its full sequence is Protein RecA (354 aa).

Position 65 to 72 (65 to 72 (GPESSGKT)) interacts with ATP.

Belongs to the RecA family.

The protein resides in the cytoplasm. In terms of biological role, can catalyze the hydrolysis of ATP in the presence of single-stranded DNA, the ATP-dependent uptake of single-stranded DNA by duplex DNA, and the ATP-dependent hybridization of homologous single-stranded DNAs. It interacts with LexA causing its activation and leading to its autocatalytic cleavage. In Vibrio cholerae serotype O1 (strain ATCC 39315 / El Tor Inaba N16961), this protein is Protein RecA.